The sequence spans 256 residues: uncharacterized protein (256 aa).

It belongs to the metallo-beta-lactamase superfamily.

This is an uncharacterized protein from Methanocaldococcus jannaschii (strain ATCC 43067 / DSM 2661 / JAL-1 / JCM 10045 / NBRC 100440) (Methanococcus jannaschii).